The chain runs to 581 residues: DNA primase (581 aa).

The segment at 40–64 (CPFHNEKTPSFTVNGEKQFYHCFGC) adopts a CHC2-type zinc-finger fold. Residues 259-341 (NRLLVVEGYM…GRQLRFMFLP (83 aa)) form the Toprim domain. Mg(2+)-binding residues include glutamate 265, aspartate 309, and aspartate 311.

The protein belongs to the DnaG primase family. Monomer. Interacts with DnaB. It depends on Zn(2+) as a cofactor. The cofactor is Mg(2+).

The catalysed reaction is ssDNA + n NTP = ssDNA/pppN(pN)n-1 hybrid + (n-1) diphosphate.. RNA polymerase that catalyzes the synthesis of short RNA molecules used as primers for DNA polymerase during DNA replication. In Escherichia coli O6:H1 (strain CFT073 / ATCC 700928 / UPEC), this protein is DNA primase.